We begin with the raw amino-acid sequence, 200 residues long: Recombination protein RecR (200 aa).

Residues 59–74 form a C4-type zinc finger; that stretch reads CDICGNVCESSPCPVC. In terms of domain architecture, Toprim spans 82–177; it reads SVICVVEEPK…KVTRLASGLP (96 aa).

Belongs to the RecR family.

In terms of biological role, may play a role in DNA repair. It seems to be involved in an RecBC-independent recombinational process of DNA repair. It may act with RecF and RecO. This chain is Recombination protein RecR, found in Bifidobacterium longum (strain DJO10A).